The primary structure comprises 342 residues: Nicotinate-nucleotide--dimethylbenzimidazole phosphoribosyltransferase (342 aa).

E311 functions as the Proton acceptor in the catalytic mechanism.

This sequence belongs to the CobT family.

The enzyme catalyses 5,6-dimethylbenzimidazole + nicotinate beta-D-ribonucleotide = alpha-ribazole 5'-phosphate + nicotinate + H(+). Its pathway is nucleoside biosynthesis; alpha-ribazole biosynthesis; alpha-ribazole from 5,6-dimethylbenzimidazole: step 1/2. Its function is as follows. Catalyzes the synthesis of alpha-ribazole-5'-phosphate from nicotinate mononucleotide (NAMN) and 5,6-dimethylbenzimidazole (DMB). The chain is Nicotinate-nucleotide--dimethylbenzimidazole phosphoribosyltransferase from Shewanella sediminis (strain HAW-EB3).